The sequence spans 830 residues: Cyclin-dependent kinase inhibitor FAR1 (830 aa).

The interval 1 to 31 (MKTPTRVSFEKKIHTPPSGDRDAERSPPKKF) is disordered. The segment covering 8–27 (SFEKKIHTPPSGDRDAERSP) has biased composition (basic and acidic residues). Serine 87 carries the phosphoserine; by CDC28 modification. A phosphoserine mark is found at serine 110 and serine 114. Residues 202 to 252 (CLICEESISSTFTGEKVVESTCSHTSHYNCYLMLFETLYFQGKFPECKICG) form an RING-type zinc finger. A Phosphothreonine modification is found at threonine 306.

In terms of assembly, associates with the CDC28-CLN complex. Post-translationally, thought to be phosphorylated by MAP kinase FUS3. Thought to enhance the binding of FAR1 to G1-specific cyclin-dependent kinase (CDK) complexes.

In terms of biological role, inhibitor of the cyclin-dependent kinase CDC28. Necessary for cell cycle arrest. Involved in pheromone response. Contributes to mating efficiency. Required for oriented polarization of yeast cells in response to mating pheromones. The polypeptide is Cyclin-dependent kinase inhibitor FAR1 (FAR1) (Saccharomyces cerevisiae (strain ATCC 204508 / S288c) (Baker's yeast)).